Here is a 130-residue protein sequence, read N- to C-terminus: Small ribosomal subunit protein uS11 (130 aa).

The protein belongs to the universal ribosomal protein uS11 family. Part of the 30S ribosomal subunit. Interacts with proteins S7 and S18. Binds to IF-3.

Functionally, located on the platform of the 30S subunit, it bridges several disparate RNA helices of the 16S rRNA. Forms part of the Shine-Dalgarno cleft in the 70S ribosome. This is Small ribosomal subunit protein uS11 from Thermoanaerobacter sp. (strain X514).